The primary structure comprises 142 residues: Large ribosomal subunit protein uL11 (142 aa).

This sequence belongs to the universal ribosomal protein uL11 family. As to quaternary structure, part of the ribosomal stalk of the 50S ribosomal subunit. Interacts with L10 and the large rRNA to form the base of the stalk. L10 forms an elongated spine to which L12 dimers bind in a sequential fashion forming a multimeric L10(L12)X complex. One or more lysine residues are methylated.

In terms of biological role, forms part of the ribosomal stalk which helps the ribosome interact with GTP-bound translation factors. This is Large ribosomal subunit protein uL11 from Nitrobacter hamburgensis (strain DSM 10229 / NCIMB 13809 / X14).